Consider the following 443-residue polypeptide: Chromosomal replication initiator protein DnaA (443 aa).

The interval 1–76 is domain I, interacts with DnaA modulators; it reads METKALWEKL…KSVLNSYVSV (76 aa). The tract at residues 76–99 is domain II; the sequence is VDFLTKEIFEKNTKKENKKEPINT. Positions 100–320 are domain III, AAA+ region; sequence VLSENALTFE…GLVNRLLFFG (221 aa). The ATP site is built by Gly-145, Gly-147, Lys-148, and Thr-149. The interval 321–443 is domain IV, binds dsDNA; it reads IQNDLGHIID…ESLKNEIIGK (123 aa).

Belongs to the DnaA family. Oligomerizes as a right-handed, spiral filament on DNA at oriC.

Its subcellular location is the cytoplasm. In terms of biological role, plays an essential role in the initiation and regulation of chromosomal replication. ATP-DnaA binds to the origin of replication (oriC) to initiate formation of the DNA replication initiation complex once per cell cycle. Binds the DnaA box (a 9 base pair repeat at the origin) and separates the double-stranded (ds)DNA. Forms a right-handed helical filament on oriC DNA; dsDNA binds to the exterior of the filament while single-stranded (ss)DNA is stabiized in the filament's interior. The ATP-DnaA-oriC complex binds and stabilizes one strand of the AT-rich DNA unwinding element (DUE), permitting loading of DNA polymerase. After initiation quickly degrades to an ADP-DnaA complex that is not apt for DNA replication. Binds acidic phospholipids. This chain is Chromosomal replication initiator protein DnaA, found in Mesoplasma florum (strain ATCC 33453 / NBRC 100688 / NCTC 11704 / L1) (Acholeplasma florum).